Consider the following 404-residue polypeptide: MFNNFLNMYMCTLAEKLCKFKKNNFNNIHRNNNFYRDNNFYRDNNFYRDNNFYRDNNFYRDNNLYTNNNLYRDNNFYRDNNFYRDNNFYRDNNLYTNNNLYRDNNLYTNNNLYRDNNFYNITLRKFHFIQTISNNNFNFEIIKKYGDVINKIMFIHTQKKNKQERFMFNNKKYIKRKEYILNDLNEFISIIPHPEINNEITNNSNQKKNKDNKQNVLSTNQQIITNYNLNHKENVTSNLNFNNKEEDEKKLDKLLKKRNIKKRDIVTITEEAKEELKKIISINKKENNNNYNNMNTICSDNHNDMNTICNDKNILKLFFITKGCNGLTHSFNFISKKDIHKEDEIIYDDQNNILLVIDKNCILYVINTTLDYYKDDLTEKFIFKNPNITSICPCGTSFHFSKKK.

The stretch at 244–289 (KEEDEKKLDKLLKKRNIKKRDIVTITEEAKEELKKIISINKKENNN) forms a coiled coil.

Belongs to the HesB/IscA family. In terms of assembly, dimer. Homotetramer. Interacts with ABCB6.

It is found in the mitochondrion. It functions in the pathway cofactor biosynthesis; iron-sulfur cluster biosynthesis. Its function is as follows. Participates in iron-sulfur cluster formation (ISC) pathway for iron-sulfur (Fe-S) cluster biogenesis. Can bind and transfer [4Fe-4S] clusters to target apo-proteins. This Plasmodium falciparum (isolate 3D7) protein is Iron-sulfur assembly protein IscA2.